Reading from the N-terminus, the 144-residue chain is Large ribosomal subunit protein uL15 (144 aa).

A compositionally biased stretch (basic residues) spans 1-13 (MVRERTKKLRGGH). Positions 1 to 32 (MVRERTKKLRGGHYGRGFKAGRGKGKKGGSGN) are disordered.

The protein belongs to the universal ribosomal protein uL15 family. Part of the 50S ribosomal subunit.

Binds to the 23S rRNA. In Thermoplasma acidophilum (strain ATCC 25905 / DSM 1728 / JCM 9062 / NBRC 15155 / AMRC-C165), this protein is Large ribosomal subunit protein uL15.